The chain runs to 295 residues: Protease HtpX (295 aa).

The next 2 helical transmembrane spans lie at 5 to 25 and 43 to 63; these read VILFLATNLAVLLVLSISMRL and ALLIFAAIIGFSGSLISLAIS. H148 serves as a coordination point for Zn(2+). E149 is a catalytic residue. H152 contacts Zn(2+). 2 helical membrane passes run 159–179 and 198–218; these read VTLALIQGVVNTFVIFLARII and FFITTLIAQTVLAILASLIVL. E225 contributes to the Zn(2+) binding site.

The protein belongs to the peptidase M48B family. It depends on Zn(2+) as a cofactor.

It localises to the cell inner membrane. The sequence is that of Protease HtpX from Nitrosococcus oceani (strain ATCC 19707 / BCRC 17464 / JCM 30415 / NCIMB 11848 / C-107).